The following is a 460-amino-acid chain: Glutamate--tRNA ligase 2 (460 aa).

The 'HIGH' region signature appears at 8–18 (PSPTGFLHVGG). The short motif at 237–241 (KLSKR) is the 'KMSKS' region element. Lys240 contacts ATP.

This sequence belongs to the class-I aminoacyl-tRNA synthetase family. Glutamate--tRNA ligase type 1 subfamily. As to quaternary structure, monomer.

It localises to the cytoplasm. It catalyses the reaction tRNA(Glu) + L-glutamate + ATP = L-glutamyl-tRNA(Glu) + AMP + diphosphate. Functionally, catalyzes the attachment of glutamate to tRNA(Glu) in a two-step reaction: glutamate is first activated by ATP to form Glu-AMP and then transferred to the acceptor end of tRNA(Glu). The protein is Glutamate--tRNA ligase 2 of Campylobacter fetus subsp. fetus (strain 82-40).